A 220-amino-acid polypeptide reads, in one-letter code: Ribosomal RNA large subunit methyltransferase E (220 aa).

The S-adenosyl-L-methionine site is built by glycine 60, tryptophan 62, aspartate 92, aspartate 108, and aspartate 133. The active-site Proton acceptor is the lysine 173. The segment at 198–220 (KPKASRDKSSETFILGRQLKHPR) is disordered.

Belongs to the class I-like SAM-binding methyltransferase superfamily. RNA methyltransferase RlmE family.

It is found in the cytoplasm. The enzyme catalyses uridine(2552) in 23S rRNA + S-adenosyl-L-methionine = 2'-O-methyluridine(2552) in 23S rRNA + S-adenosyl-L-homocysteine + H(+). Specifically methylates the uridine in position 2552 of 23S rRNA at the 2'-O position of the ribose in the fully assembled 50S ribosomal subunit. The sequence is that of Ribosomal RNA large subunit methyltransferase E from Burkholderia cenocepacia (strain HI2424).